We begin with the raw amino-acid sequence, 461 residues long: MAGLRPGAGVPPGTPWPISPGKHCVRSAISRRARLPYHAPGTPLGRFRRAPDEGSCRMAHIAFFILPAAGHVNPTLGVAEELAARGHRVTYALPEDMADRAVRVGARAVTYPLDRERFRADMVPKEESDEYTDEGEFLKVLEWLLDTTADTLPLLESAFAEDRPDVVANDPSTFWTGLLLAGKWDIPVIRSTPSYASNEHWALHPPFEPGAAQVDPALIELTARAEKLLKEHGTTSDPVAFAATVQSGPGLFYMPRYFQYAGETFDDRHHFVGPCAPRASFHGTWQRPEDGRPLVMVSLGTIYNERPGIFRACVEAFRDRPWNILLVLGGGLGAGDLGPLPENVLVRDFVPLGDVLPHTDLLVNHGGTSTAMEALAHGVPIVAMPEMPEPRATARRIAELDLGDWLLPGEVTAEKLSGIAQRVLTDDRIRKGLDRMRGEIRRAGGPAVAADVIEGLLSPAA.

Positions 1 to 21 are disordered; the sequence is MAGLRPGAGVPPGTPWPISPG.

Belongs to the UDP-glycosyltransferase family.

The catalysed reaction is dTDP-beta-L-mycarose + demethyllactenocin = demethylmacrocin + dTDP + H(+). In terms of biological role, involved in the biosynthesis of mycarose which is a 6-deoxyhexose sugar required during production of the macrolide antibiotic tylosin. Catalyzes the transfer of L-mycarosyl from dTDP-beta-L-mycarose to demethyllactenocin to yield demethylmacrocin. This chain is Demethyllactenocin mycarosyltransferase (tylCV), found in Streptomyces fradiae (Streptomyces roseoflavus).